The following is a 76-amino-acid chain: DNA-directed RNA polymerase subunit omega (76 aa).

Belongs to the RNA polymerase subunit omega family. In terms of assembly, the RNAP catalytic core consists of 2 alpha, 1 beta, 1 beta' and 1 omega subunit. When a sigma factor is associated with the core the holoenzyme is formed, which can initiate transcription.

The enzyme catalyses RNA(n) + a ribonucleoside 5'-triphosphate = RNA(n+1) + diphosphate. Its function is as follows. Promotes RNA polymerase assembly. Latches the N- and C-terminal regions of the beta' subunit thereby facilitating its interaction with the beta and alpha subunits. In Aquifex aeolicus (strain VF5), this protein is DNA-directed RNA polymerase subunit omega (rpoZ).